Reading from the N-terminus, the 236-residue chain is MNSEKPDYNYLFKIVIIGDRKTGKTCLMNRFVENTWSEEYRQTNLLHFKVKTIYIDCKIIKLQIWDSQADENFRFNNNNLSNYRSASGFLVVYDCTNENSFSNLKHWIKDIKLYGRPNAINIVVSNKSDLVNEKVIDSDVAKSYCDSLEIPFIETSSKHSSNVEDCFVLLIKNVMKYLETEPTIPQQQQQQQQQQQQQQQQQQQQQQQQQQQQQQQQQQQQQHQQSSKTKIGCLIQ.

Position 18-25 (18-25 (GDRKTGKT)) interacts with GTP. Residues 40–48 (YRQTNLLHF) carry the Effector region motif. GTP-binding positions include 66-70 (DSQAD) and 126-129 (NKSD). Positions 192-225 (QQQQQQQQQQQQQQQQQQQQQQQQQQQQQQQHQQ) are enriched in low complexity. Positions 192-236 (QQQQQQQQQQQQQQQQQQQQQQQQQQQQQQQHQQSSKTKIGCLIQ) are disordered. Cysteine methyl ester is present on C233. Residue C233 is the site of S-geranylgeranyl cysteine attachment. A propeptide spans 234 to 236 (LIQ) (removed in mature form).

This sequence belongs to the small GTPase superfamily. Rab family.

The protein resides in the cell membrane. In Dictyostelium discoideum (Social amoeba), this protein is Ras-related protein RabY (rabY).